The sequence spans 57 residues: Large ribosomal subunit protein bL32 (57 aa).

The segment at 1–22 (MAVPKKKTSKSKRDKRRATWRH) is disordered.

The protein belongs to the bacterial ribosomal protein bL32 family.

The protein is Large ribosomal subunit protein bL32 of Nostoc punctiforme (strain ATCC 29133 / PCC 73102).